A 450-amino-acid chain; its full sequence is FAD-linked oxidoreductase penO (450 aa).

The 172-residue stretch at 32–203 (PPELPYAIVK…TRFFIRTRPA (172 aa)) folds into the FAD-binding PCMH-type domain.

This sequence belongs to the oxygen-dependent FAD-linked oxidoreductase family. FAD is required as a cofactor.

It functions in the pathway secondary metabolite biosynthesis. Functionally, FAD-linked oxidoreductase; part of the gene cluster that mediates the biosynthesis of the indole diterpenes penitrems. The geranylgeranyl diphosphate (GGPP) synthase penG catalyzes the first step in penitrem biosynthesis via conversion of farnesyl pyrophosphate and isopentyl pyrophosphate into geranylgeranyl pyrophosphate (GGPP). Condensation of indole-3-glycerol phosphate with GGPP by the prenyl transferase penC then forms 3-geranylgeranylindole (3-GGI). Epoxidation by the FAD-dependent monooxygenase penM leads to a epoxidized-GGI that is substrate of the terpene cyclase penB for cyclization to yield paspaline. Paspaline is subsequently converted to 13-desoxypaxilline by the cytochrome P450 monooxygenase penP, the latter being then converted to paxilline by the cytochrome P450 monooxygenase penQ. Paxilline is converted to beta-paxitriol via C-10 ketoreduction by the short-chain dehydrogenase PC-15 which can be monoprenylated at the C-20 by the indole diterpene prenyltransferase penD. A two-step elimination (acetylation and elimination) process performed by the O-acetyltransferase PC-16 and the P.simplicissimum ptmI-ortholog not yet identified in P.crustosum, leads to the production of the prenylated form of penijanthine. The FAD-linked oxidoreductase ptmO then converts the prenylated form of penijanthine into PC-M5 which is in turn transformed into PC-M4 by the aromatic dimethylallyltransferase PC-22. A series of oxidation steps involving 4 cytochrome P450 monooxygenases (PC-21, PC-05, PC-23, PC-20) and a FAD-dependent monooxygenase (PC-14) are required for the transformation of PC-M4 to penitrems A and E. Synthesis of these final products is proposed to proceed via penitrems D and C (PC-21, PC-05, PC-14) and penitrems B and F (PC-21, PC-05, PC-14, PC-23). The polypeptide is FAD-linked oxidoreductase penO (Penicillium crustosum (Blue mold fungus)).